Here is a 379-residue protein sequence, read N- to C-terminus: Cytochrome b (379 aa).

4 helical membrane passes run 34 to 54 (FGSL…FLAM), 78 to 99 (WLIR…YLHI), 114 to 134 (WNTG…GYVL), and 179 to 199 (FFTF…VHLL). The heme b site is built by H84 and H98. Heme b-binding residues include H183 and H197. Residue H202 coordinates a ubiquinone. The next 4 helical transmembrane spans lie at 227–247 (YKDL…TLFY), 289–309 (LGGV…PTLH), 321–341 (LTQT…WIGG), and 348–368 (FITI…ILMP).

This sequence belongs to the cytochrome b family. In terms of assembly, the cytochrome bc1 complex contains 3 respiratory subunits (MT-CYB, CYC1 and UQCRFS1), 2 core proteins (UQCRC1 and UQCRC2) and probably 6 low-molecular weight proteins. Heme b serves as cofactor.

It is found in the mitochondrion inner membrane. Functionally, component of the ubiquinol-cytochrome c reductase complex (complex III or cytochrome b-c1 complex) that is part of the mitochondrial respiratory chain. The b-c1 complex mediates electron transfer from ubiquinol to cytochrome c. Contributes to the generation of a proton gradient across the mitochondrial membrane that is then used for ATP synthesis. The polypeptide is Cytochrome b (MT-CYB) (Glyptemys muhlenbergii (Bog turtle)).